The sequence spans 271 residues: uncharacterized protein (271 aa).

An N-terminal signal peptide occupies residues methionine 1–cysteine 18. Residues alanine 19–tyrosine 187 are Lumenal-facing. A helical transmembrane segment spans residues phenylalanine 188–tryptophan 208. Residues glutamine 209 to glycine 230 are Cytoplasmic-facing. Residues phenylalanine 231–phenylalanine 251 traverse the membrane as a helical segment. The Lumenal portion of the chain corresponds to glutamine 252–leucine 271.

The protein resides in the endoplasmic reticulum membrane. This is an uncharacterized protein from Schizosaccharomyces pombe (strain 972 / ATCC 24843) (Fission yeast).